A 374-amino-acid chain; its full sequence is tRNA-specific 2-thiouridylase MnmA (374 aa).

Residues 12–19 (GMSGGVDS) and methionine 38 contribute to the ATP site. Residues 98–100 (NPD) form an interaction with target base in tRNA region. Cysteine 103 (nucleophile) is an active-site residue. Cysteine 103 and cysteine 202 form a disulfide bridge. Glycine 128 lines the ATP pocket. Positions 152–154 (KDQ) are interaction with tRNA. The active-site Cysteine persulfide intermediate is cysteine 202. Positions 316-317 (RY) are interaction with tRNA.

This sequence belongs to the MnmA/TRMU family.

The protein resides in the cytoplasm. The catalysed reaction is S-sulfanyl-L-cysteinyl-[protein] + uridine(34) in tRNA + AH2 + ATP = 2-thiouridine(34) in tRNA + L-cysteinyl-[protein] + A + AMP + diphosphate + H(+). Its function is as follows. Catalyzes the 2-thiolation of uridine at the wobble position (U34) of tRNA, leading to the formation of s(2)U34. The polypeptide is tRNA-specific 2-thiouridylase MnmA (Vibrio campbellii (strain ATCC BAA-1116)).